The sequence spans 224 residues: PKHD-type hydroxylase HNE_1625 (224 aa).

Positions 77 to 175 (KFAPPLISCS…RFVFVGWIQS (99 aa)) constitute a Fe2OG dioxygenase domain. Residues His95, Asp97, and His156 each coordinate Fe cation. 2-oxoglutarate is bound at residue Arg166.

Requires Fe(2+) as cofactor. The cofactor is L-ascorbate.

This chain is PKHD-type hydroxylase HNE_1625, found in Hyphomonas neptunium (strain ATCC 15444).